Reading from the N-terminus, the 207-residue chain is MIOREX complex component 11 (207 aa).

The N-terminal 46 residues, 1-46 (MTVMNLFFRPCQLQMGSGPLELMLKRPTQLTTFMNTRPGGSTQIRF), are a transit peptide targeting the mitochondrion. The Mitochondrial matrix portion of the chain corresponds to 47 to 98 (ISGNLDPVKRREDRLRKIFSKSRLLTRLNKNPKFSHYFDRLSEAGTVPTLTS). A helical transmembrane segment spans residues 99 to 119 (FFILHEVTAILPLFLLWWLLY). Over 120-177 (NLDLSDDFKLPNFLNGLMDSCHTAMEKFVGKRYQECLNKNKLILSGTVAYVTVKLLYP) the chain is Mitochondrial intermembrane. A helical membrane pass occupies residues 178 to 198 (VRIFISIWGAPYFGKWLLLPF). Residues 199–207 (QKLKHLIKK) lie on the Mitochondrial matrix side of the membrane.

This sequence belongs to the MRX11 family. As to quaternary structure, associates with the mitochondrial ribosome.

The protein resides in the mitochondrion. The protein localises to the mitochondrion inner membrane. Component of MIOREX complexes, large expressome-like assemblies of ribosomes with factors involved in all the steps of post-transcriptional gene expression. The chain is MIOREX complex component 11 from Saccharomyces cerevisiae (strain ATCC 204508 / S288c) (Baker's yeast).